The chain runs to 509 residues: BPI fold-containing family C protein (509 aa).

Positions 1–23 (MRTKQVPVLWACFLLWSLYIASS) are cleaved as a signal peptide. N-linked (GlcNAc...) asparagine glycans are attached at residues N63, N79, N92, N113, and N117. An intrachain disulfide couples C161 to C202. Residues N215, N227, N357, N374, and N457 are each glycosylated (N-linked (GlcNAc...) asparagine).

It belongs to the BPI/LBP/Plunc superfamily. BPI/LBP family.

It localises to the secreted. The chain is BPI fold-containing family C protein (Bpifc) from Mus musculus (Mouse).